The following is a 479-amino-acid chain: V-type ATP synthase beta chain (479 aa).

The disordered stretch occupies residues 458–479; the sequence is EGDSEREAPKMDSPHEEISEKS.

This sequence belongs to the ATPase alpha/beta chains family.

Its function is as follows. Produces ATP from ADP in the presence of a proton gradient across the membrane. The V-type beta chain is a regulatory subunit. This Nitrosococcus oceani (strain ATCC 19707 / BCRC 17464 / JCM 30415 / NCIMB 11848 / C-107) protein is V-type ATP synthase beta chain.